Here is a 253-residue protein sequence, read N- to C-terminus: Phosphate import ATP-binding protein PstB (253 aa).

Positions 5 to 248 constitute an ABC transporter domain; sequence IETVNLNVYY…PEHELTEKYV (244 aa). 37 to 44 serves as a coordination point for ATP; the sequence is GPSGCGKS.

It belongs to the ABC transporter superfamily. Phosphate importer (TC 3.A.1.7) family. As to quaternary structure, the complex is composed of two ATP-binding proteins (PstB), two transmembrane proteins (PstC and PstA) and a solute-binding protein (PstS).

It is found in the cell membrane. It carries out the reaction phosphate(out) + ATP + H2O = ADP + 2 phosphate(in) + H(+). Its function is as follows. Part of the ABC transporter complex PstSACB involved in phosphate import. Responsible for energy coupling to the transport system. This is Phosphate import ATP-binding protein PstB from Thermococcus kodakarensis (strain ATCC BAA-918 / JCM 12380 / KOD1) (Pyrococcus kodakaraensis (strain KOD1)).